A 545-amino-acid polypeptide reads, in one-letter code: Eukaryotic translation initiation factor 3 subunit D-2 (545 aa).

Over residues 99 to 113 the composition is skewed to basic residues; sequence FRGNIRNNPRTRGRT. The tract at residues 99 to 158 is disordered; it reads FRGNIRNNPRTRGRTGRGGAVTGIGGNQPGVGVNERTKYGKGRDNRRQMGRRFGRNAPTR. Residues 114 to 127 show a composition bias toward gly residues; the sequence is GRGGAVTGIGGNQP. Positions 133–145 are enriched in basic and acidic residues; the sequence is ERTKYGKGRDNRR. Residues 287-301 are RNA gate; sequence QFDLLTVNETALEPP.

It belongs to the eIF-3 subunit D family. As to quaternary structure, component of the eukaryotic translation initiation factor 3 (eIF-3) complex. The eIF-3 complex interacts with pix.

It localises to the cytoplasm. MRNA cap-binding component of the eukaryotic translation initiation factor 3 (eIF-3) complex, which is involved in protein synthesis of a specialized repertoire of mRNAs and, together with other initiation factors, stimulates binding of mRNA and methionyl-tRNAi to the 40S ribosome. The eIF-3 complex specifically targets and initiates translation of a subset of mRNAs involved in cell proliferation. In the eIF-3 complex, eif3d specifically recognizes and binds the 7-methylguanosine cap of a subset of mRNAs. The chain is Eukaryotic translation initiation factor 3 subunit D-2 from Drosophila persimilis (Fruit fly).